Consider the following 501-residue polypeptide: ATP synthase subunit alpha (501 aa).

ATP is bound at residue 169–176 (GDRQTGKT).

It belongs to the ATPase alpha/beta chains family. F-type ATPases have 2 components, CF(1) - the catalytic core - and CF(0) - the membrane proton channel. CF(1) has five subunits: alpha(3), beta(3), gamma(1), delta(1), epsilon(1). CF(0) has three main subunits: a(1), b(2) and c(9-12). The alpha and beta chains form an alternating ring which encloses part of the gamma chain. CF(1) is attached to CF(0) by a central stalk formed by the gamma and epsilon chains, while a peripheral stalk is formed by the delta and b chains.

The protein resides in the cell membrane. It carries out the reaction ATP + H2O + 4 H(+)(in) = ADP + phosphate + 5 H(+)(out). In terms of biological role, produces ATP from ADP in the presence of a proton gradient across the membrane. The alpha chain is a regulatory subunit. In Streptococcus pneumoniae (strain Hungary19A-6), this protein is ATP synthase subunit alpha.